A 251-amino-acid chain; its full sequence is ATP synthase subunit a (251 aa).

Helical transmembrane passes span 34–54 (VFLT…AASS), 93–113 (FVGT…LVPF), 130–150 (INTT…AGFS), 195–215 (LVVG…VMAL), and 216–236 (GLFT…AYIG).

This sequence belongs to the ATPase A chain family. In terms of assembly, F-type ATPases have 2 components, CF(1) - the catalytic core - and CF(0) - the membrane proton channel. CF(1) has five subunits: alpha(3), beta(3), gamma(1), delta(1), epsilon(1). CF(0) has four main subunits: a, b, b' and c.

The protein resides in the cellular thylakoid membrane. Key component of the proton channel; it plays a direct role in the translocation of protons across the membrane. This chain is ATP synthase subunit a, found in Trichormus variabilis (strain ATCC 29413 / PCC 7937) (Anabaena variabilis).